The following is a 124-amino-acid chain: Small ribosomal subunit protein uS12 (124 aa).

Asp-89 is modified (3-methylthioaspartic acid).

The protein belongs to the universal ribosomal protein uS12 family. As to quaternary structure, part of the 30S ribosomal subunit. Contacts proteins S8 and S17. May interact with IF1 in the 30S initiation complex.

With S4 and S5 plays an important role in translational accuracy. Its function is as follows. Interacts with and stabilizes bases of the 16S rRNA that are involved in tRNA selection in the A site and with the mRNA backbone. Located at the interface of the 30S and 50S subunits, it traverses the body of the 30S subunit contacting proteins on the other side and probably holding the rRNA structure together. The combined cluster of proteins S8, S12 and S17 appears to hold together the shoulder and platform of the 30S subunit. This is Small ribosomal subunit protein uS12 from Vibrio vulnificus (strain CMCP6).